Here is a 318-residue protein sequence, read N- to C-terminus: 4-diphosphocytidyl-2-C-methyl-D-erythritol kinase (318 aa).

The active site involves K13. Residue 101 to 111 (PVAGGMAGGSA) coordinates ATP. D143 is an active-site residue. A disordered region spans residues 298–318 (PGARLVTDDRADRPTPPQVHA).

This sequence belongs to the GHMP kinase family. IspE subfamily.

The catalysed reaction is 4-CDP-2-C-methyl-D-erythritol + ATP = 4-CDP-2-C-methyl-D-erythritol 2-phosphate + ADP + H(+). It functions in the pathway isoprenoid biosynthesis; isopentenyl diphosphate biosynthesis via DXP pathway; isopentenyl diphosphate from 1-deoxy-D-xylulose 5-phosphate: step 3/6. Functionally, catalyzes the phosphorylation of the position 2 hydroxy group of 4-diphosphocytidyl-2C-methyl-D-erythritol. The protein is 4-diphosphocytidyl-2-C-methyl-D-erythritol kinase of Saccharopolyspora erythraea (strain ATCC 11635 / DSM 40517 / JCM 4748 / NBRC 13426 / NCIMB 8594 / NRRL 2338).